Here is a 293-residue protein sequence, read N- to C-terminus: Small ribosomal subunit protein uS2m (293 aa).

Residues 21-38 (GRAAQRGRTLGSAAAAAA) show a composition bias toward low complexity. 2 disordered regions span residues 21 to 49 (GRAA…DRSA) and 263 to 293 (QGAP…GHSP). Residues 39–49 (REPERDSDRSA) show a composition bias toward basic and acidic residues. Pro residues predominate over residues 267–279 (GPHPANPAAPGAP).

It belongs to the universal ribosomal protein uS2 family. As to quaternary structure, component of the mitochondrial ribosome small subunit (28S) which comprises a 12S rRNA and about 30 distinct proteins.

Its subcellular location is the mitochondrion. Its function is as follows. Required for mitoribosome formation and stability, and mitochondrial translation. The polypeptide is Small ribosomal subunit protein uS2m (MRPS2) (Bos taurus (Bovine)).